The following is a 707-amino-acid chain: Solute carrier family 15 member 1 (707 aa).

A helical transmembrane segment spans residues 1–21 (MGMSKSLSCFGYPLSIFFIVV). Residues 22–53 (NEFCERFSYYGMRALLILYFRNFIGWDDNLST) are Extracellular-facing. N-linked (GlcNAc...) asparagine glycosylation occurs at Asn-50. Residues 54 to 74 (VIYHTFVALCYLTPILGALIA) form a helical membrane-spanning segment. At 75–82 (DAWLGKFK) the chain is on the cytoplasmic side. A helical transmembrane segment spans residues 83–103 (TIVWLSIVYTIGQAVTSLSSV). At 104–118 (NELTDNNHDGTPDSL) the chain is on the extracellular side. The chain crosses the membrane as a helical span at residues 119–139 (PVHVAVCMIGLLLIALGTGGI). Over 140 to 161 (KPCVSAFGGDQFEEGQEKQRNR) the chain is Cytoplasmic. A helical membrane pass occupies residues 162–182 (FFSIFYLAINAGSLLSTIITP). The Extracellular portion of the chain corresponds to 183-198 (MVRVQQCGIHVKQACY). Residues 199-219 (PLAFGIPAILMAVSLIVFIIG) traverse the membrane as a helical segment. At 220–276 (SGMYKKFKPQGNILSKVVKCICFAIKNRFRHRSKQFPKRAHWLDWAKEKYDERLIAQ) the chain is on the cytoplasmic side. Residues 277-297 (IKMVTRVLFLYIPLPMFWALF) form a helical membrane-spanning segment. Topologically, residues 298-327 (DQQGSRWTLQATTMSGRIGILEIQPDQMQT) are extracellular. A helical transmembrane segment spans residues 328 to 348 (VNTILIIILVPIMDAVVYPLI). Over 349-361 (AKCGLNFTSLKKM) the chain is Cytoplasmic. A helical membrane pass occupies residues 362-382 (TIGMFLASMAFVAAAILQVEI). The Extracellular segment spans residues 383-583 (DKTLPVFPKA…PPNTMNMAWQ (201 aa)). Positions 383-583 (DKTLPVFPKA…PPNTMNMAWQ (201 aa)) are extracellular domain (ECD). 3 N-linked (GlcNAc...) asparagine glycosylation sites follow: Asn-439, Asn-498, and Asn-513. A helical membrane pass occupies residues 584-604 (IPQYFLITSGEVVFSITGLEF). Residues 605-618 (SYSQAPSNMKSVLQ) lie on the Cytoplasmic side of the membrane. A helical membrane pass occupies residues 619–639 (AGWLLTVAVGNIIVLIVAGAG). Over 640–644 (QINKQ) the chain is Extracellular. Residues 645–665 (WAEYILFAALLLVVCVIFAIM) traverse the membrane as a helical segment. Residues 666–707 (ARFYTYVNPAEIEAQFEEDEKKKNPEKNDLYPSLAPVSQTQM) are Cytoplasmic-facing. The interval 682–707 (EEDEKKKNPEKNDLYPSLAPVSQTQM) is disordered. Basic and acidic residues predominate over residues 684–694 (DEKKKNPEKND).

This sequence belongs to the major facilitator superfamily. Proton-dependent oligopeptide transporter (POT/PTR) (TC 2.A.17) family. As to quaternary structure, interacts (via extracellular domain region) with trypsin. Intestine, kidney, liver and low in brain.

It is found in the apical cell membrane. The catalysed reaction is a dipeptide(out) + H(+)(out) = a dipeptide(in) + H(+)(in). The enzyme catalyses an L-amino acid tripeptide(out) + H(+)(out) = an L-amino acid tripeptide(in) + H(+)(in). It catalyses the reaction L-alanyl-L-lysine(out) + H(+)(out) = L-alanyl-L-lysine(in) + H(+)(in). It carries out the reaction L-alanyl-L-proline(out) + H(+)(out) = L-alanyl-L-proline(in) + H(+)(in). The catalysed reaction is L-alanyl-L-valine(out) + H(+)(out) = L-alanyl-L-valine(in) + H(+)(in). The enzyme catalyses carnosine(out) + H(+)(out) = carnosine(in) + H(+)(in). It catalyses the reaction glycyl-L-glutamine(out) + H(+)(out) = glycyl-L-glutamine(in) + H(+)(in). It carries out the reaction glycyl-L-leucine(out) + H(+)(out) = glycyl-L-leucine(in) + H(+)(in). The catalysed reaction is glycyl-L-proline(out) + H(+)(out) = glycyl-L-proline(in) + H(+)(in). The enzyme catalyses glycyl-sarcosine(out) + H(+)(out) = glycyl-sarcosine(in) + H(+)(in). It catalyses the reaction L-leucyl-L-leucine(out) + H(+)(out) = L-leucyl-L-leucine(in) + H(+)(in). It carries out the reaction L-leucyl-L-proline(out) + H(+)(out) = L-leucyl-L-proline(in) + H(+)(in). The catalysed reaction is L-phenylalanyl-L-leucine(out) + H(+)(out) = L-phenylalanyl-L-leucine(in) + H(+)(in). The enzyme catalyses L-phenylalanyl-L-phenylalanine(out) + H(+)(out) = L-phenylalanyl-L-phenylalanine(in) + H(+)(in). It catalyses the reaction L-lysyl-glycine(out) + H(+)(out) = L-lysyl-glycine(in) + H(+)(in). It carries out the reaction L-tyrosylglycine(out) + H(+)(out) = L-tyrosylglycine(in) + H(+)(in). The catalysed reaction is L-alanyl-L-aspartate(out) + 2 H(+)(out) = L-alanyl-L-aspartate(in) + 2 H(+)(in). The enzyme catalyses L-aspartyl-glycine(out) + 2 H(+)(out) = L-aspartyl-glycine(in) + 2 H(+)(in). It catalyses the reaction glycyl-L-aspartate(out) + 2 H(+)(out) = glycyl-L-aspartate(in) + 2 H(+)(in). It carries out the reaction glycyl-L-glutamate(out) + 2 H(+)(out) = glycyl-L-glutamate(in) + 2 H(+)(in). The catalysed reaction is L-alanyl-L-leucyl-L-alanine(out) + H(+)(out) = L-alanyl-L-leucyl-L-alanine(in) + H(+)(in). The enzyme catalyses L-alanyl-L-prolylglycine(out) + H(+)(out) = L-alanyl-L-prolylglycine(in) + H(+)(in). It catalyses the reaction glycylglycyl-L-isoleucine(out) + H(+)(out) = glycylglycyl-L-isoleucine(in) + H(+)(in). It carries out the reaction glycylglycyl-L-proline(out) + H(+)(out) = glycylglycyl-L-proline(in) + H(+)(in). The catalysed reaction is L-methionyl-L-phenylalanyl-L-methionine(out) + H(+)(out) = L-methionyl-L-phenylalanyl-L-methionine(in) + H(+)(in). The enzyme catalyses N-acetyl-D-muramoyl-L-alanyl-D-isoglutamine(out) + 2 H(+)(out) = N-acetyl-D-muramoyl-L-alanyl-D-isoglutamine(in) + 2 H(+)(in). It catalyses the reaction N(alpha)-formyl-L-methionyl-L-leucyl-L-phenylalanine(out) + 2 H(+)(out) = N(alpha)-formyl-L-methionyl-L-leucyl-L-phenylalanine(in) + 2 H(+)(in). Functionally, electrogenic proton-coupled amino-acid transporter that transports oligopeptides of 2 to 4 amino acids with a preference for dipeptides. Transports neutral and monovalently charged peptides with a proton to peptide stoichiometry of 1:1 or 2:1. Primarily responsible for the absorption of dietary di- and tripeptides from the small intestinal lumen. Mediates transepithelial transport of muramyl and N-formylated bacterial dipeptides contributing to recognition of pathogenic bacteria by the mucosal immune system. The polypeptide is Solute carrier family 15 member 1 (SLC15A1) (Oryctolagus cuniculus (Rabbit)).